We begin with the raw amino-acid sequence, 61 residues long: Transcription elongation factor Spt4 (61 aa).

4 residues coordinate Zn(2+): C6, C9, C18, and C21.

The protein belongs to the archaeal Spt4 family. In terms of assembly, heterodimer composed of Spt4 and Spt5.

Functionally, stimulates transcription elongation. The protein is Transcription elongation factor Spt4 of Pyrococcus furiosus (strain ATCC 43587 / DSM 3638 / JCM 8422 / Vc1).